A 285-amino-acid chain; its full sequence is 4-diphosphocytidyl-2-C-methyl-D-erythritol kinase (285 aa).

The active site involves Lys-12. Residue 95–105 (PMGGGVGGGSS) coordinates ATP. Asp-137 is an active-site residue.

Belongs to the GHMP kinase family. IspE subfamily.

It carries out the reaction 4-CDP-2-C-methyl-D-erythritol + ATP = 4-CDP-2-C-methyl-D-erythritol 2-phosphate + ADP + H(+). It functions in the pathway isoprenoid biosynthesis; isopentenyl diphosphate biosynthesis via DXP pathway; isopentenyl diphosphate from 1-deoxy-D-xylulose 5-phosphate: step 3/6. Its function is as follows. Catalyzes the phosphorylation of the position 2 hydroxy group of 4-diphosphocytidyl-2C-methyl-D-erythritol. The polypeptide is 4-diphosphocytidyl-2-C-methyl-D-erythritol kinase (Actinobacillus pleuropneumoniae serotype 5b (strain L20)).